Consider the following 227-residue polypeptide: Enolase-phosphatase E1 (227 aa).

Belongs to the HAD-like hydrolase superfamily. MasA/MtnC family. Monomer. Requires Mg(2+) as cofactor.

It catalyses the reaction 5-methylsulfanyl-2,3-dioxopentyl phosphate + H2O = 1,2-dihydroxy-5-(methylsulfanyl)pent-1-en-3-one + phosphate. It participates in amino-acid biosynthesis; L-methionine biosynthesis via salvage pathway; L-methionine from S-methyl-5-thio-alpha-D-ribose 1-phosphate: step 3/6. Its pathway is amino-acid biosynthesis; L-methionine biosynthesis via salvage pathway; L-methionine from S-methyl-5-thio-alpha-D-ribose 1-phosphate: step 4/6. Functionally, bifunctional enzyme that catalyzes the enolization of 2,3-diketo-5-methylthiopentyl-1-phosphate (DK-MTP-1-P) into the intermediate 2-hydroxy-3-keto-5-methylthiopentenyl-1-phosphate (HK-MTPenyl-1-P), which is then dephosphorylated to form the acireductone 1,2-dihydroxy-3-keto-5-methylthiopentene (DHK-MTPene). The chain is Enolase-phosphatase E1 from Methylococcus capsulatus (strain ATCC 33009 / NCIMB 11132 / Bath).